Here is a 431-residue protein sequence, read N- to C-terminus: Argininosuccinate lyase (431 aa).

It belongs to the lyase 1 family. Argininosuccinate lyase subfamily.

It is found in the cytoplasm. It catalyses the reaction 2-(N(omega)-L-arginino)succinate = fumarate + L-arginine. The protein operates within amino-acid biosynthesis; L-arginine biosynthesis; L-arginine from L-ornithine and carbamoyl phosphate: step 3/3. The polypeptide is Argininosuccinate lyase (Stenotrophomonas maltophilia (strain R551-3)).